We begin with the raw amino-acid sequence, 188 residues long: Elongation factor P (188 aa).

Residue Lys34 is modified to N6-(3,6-diaminohexanoyl)-5-hydroxylysine.

This sequence belongs to the elongation factor P family. May be beta-lysylated on the epsilon-amino group of Lys-34 by the combined action of EpmA and EpmB, and then hydroxylated on the C5 position of the same residue by EpmC (if this protein is present). Lysylation is critical for the stimulatory effect of EF-P on peptide-bond formation. The lysylation moiety may extend toward the peptidyltransferase center and stabilize the terminal 3-CCA end of the tRNA. Hydroxylation of the C5 position on Lys-34 may allow additional potential stabilizing hydrogen-bond interactions with the P-tRNA.

It is found in the cytoplasm. It participates in protein biosynthesis; polypeptide chain elongation. Functionally, involved in peptide bond synthesis. Alleviates ribosome stalling that occurs when 3 or more consecutive Pro residues or the sequence PPG is present in a protein, possibly by augmenting the peptidyl transferase activity of the ribosome. Modification of Lys-34 is required for alleviation. This Xanthomonas axonopodis pv. citri (strain 306) protein is Elongation factor P.